Here is a 971-residue protein sequence, read N- to C-terminus: Nuclear factor NF-kappa-B p110 subunit (971 aa).

Over residues 23–41 the composition is skewed to low complexity; it reads STSGYSSSTSPNSTNRSFS. Residues 23–46 are disordered; sequence STSGYSSSTSPNSTNRSFSPAHSP. The 193-residue stretch at 147–339 folds into the RHD domain; sequence KHVPQLRIVE…NAINNRKSAQ (193 aa). At Ser-431 the chain carries Phosphoserine; by PKA. Residues 452–457 carry the Nuclear localization signal motif; the sequence is SRKRRR. The tract at residues 453–496 is disordered; sequence RKRRRTGSSANSSSSGTESSNNSLDLPKTLGLAQPPNGLPNLSQ. The span at 460-475 shows a compositional bias: low complexity; that stretch reads SSANSSSSGTESSNNS. At Thr-620 the chain carries Phosphothreonine. Position 626 is a phosphotyrosine (Tyr-626). 5 ANK repeats span residues 640 to 669, 673 to 702, 710 to 740, 745 to 775, and 783 to 812; these read DGDS…NPNL, AGNT…TVQL, DGLT…SISV, DGNN…NLTD, and AGHT…EKGE. The interval 826–877 is disordered; that stretch reads IDSSSDESSDAGQLEIKSEEMDIETKDEDSVELDLSSGPRRQKDESSRDTEM. Positions 866-877 are enriched in basic and acidic residues; the sequence is RQKDESSRDTEM. Ser-950 is modified (phosphoserine).

In terms of assembly, rel-p68 subunit interacts with Dredd. Interacts with DMAP1. Interacts with akirin; interaction is immune stimulation-dependent; activates selected rel target gene promoters. In terms of processing, phosphorylated by lipopolysaccharide (LPS)-activated I-kappa-B kinase complex before being cleaved. Rel-p110 subunit is cleaved within seconds of an immune challenge into Rel-p49 subunit and Rel-p68 subunit. Rel-p110 subunit reappears after 45 minutes.

It localises to the nucleus. The protein localises to the cytoplasm. Its function is as follows. Transcription factor that plays a key role in the humoral immune response as part of the peptidoglycan recognition protein (IMD) signaling pathway. Rel-p68 subunit translocates to the nucleus where it binds to the promoter of the Cecropin A1 gene and probably other antimicrobial peptide genes. I-kappa-B kinase complex (IKKbeta and key) and PGRP-LC are essential signaling components in transmitting the lipopolysaccharide (LPS) signal leading to cact degradation for NF-kappa-B (rel) activation. Part of a Toll-related receptor pathway that functions in the apoptosis of unfit cells during cell competition. Also part of some antiviral immunity: activated downstream of Sting signaling, which detects double-stranded RNA (dsRNA) from viruses, and promotes expression of antiviral effector genes. May be part of a NF-kappa-B and Tollo signaling cascade that regulates development of the peripheral nervous system. Possibly post-transcriptionally regulates the neuron-specific genes sc and ase, by promoting the rapid turnover of their transcripts in the wing imaginal disk. This chain is Nuclear factor NF-kappa-B p110 subunit, found in Drosophila melanogaster (Fruit fly).